Reading from the N-terminus, the 58-residue chain is Small ribosomal subunit protein bS21 (58 aa).

Positions 31–42 are enriched in basic and acidic residues; that stretch reads EIRKREHYEKPS. Residues 31–58 are disordered; the sequence is EIRKREHYEKPSVKRKKKSEAARKRKYN. The span at 43–58 shows a compositional bias: basic residues; it reads VKRKKKSEAARKRKYN.

It belongs to the bacterial ribosomal protein bS21 family.

This is Small ribosomal subunit protein bS21 from Agathobacter rectalis (strain ATCC 33656 / DSM 3377 / JCM 17463 / KCTC 5835 / VPI 0990) (Eubacterium rectale).